The chain runs to 152 residues: Mitochondrial fission 1 protein (152 aa).

N-acetylmethionine is present on methionine 1. Over 1 to 122 (MEAVLNELVS…LIDKAMKKDG (122 aa)) the chain is Cytoplasmic. Serine 10 carries the phosphoserine modification. The TPR repeat unit spans residues 71–104 (RDYVFYLAVGNYRLKEYEKALKYVRGLLQTEPQN). The chain crosses the membrane as a helical span at residues 123-143 (LVGMAIVGGMALGVAGLAGLI). The Mitochondrial intermembrane segment spans residues 144 to 152 (GLAVSKSKS).

It belongs to the FIS1 family. As to quaternary structure, interacts with DNM1L/DLP1 through the TPR region; may form part of a larger protein complex at the endoplasmic reticulum-mitochondrial interface during mitochondrial fission. Interacts with MARCHF5. Interacts with MIEF1. Interacts with PEX11A, PEX11B and PEX11G. In terms of processing, ubiquitinated by MARCHF5.

The protein resides in the mitochondrion outer membrane. Its subcellular location is the peroxisome membrane. Its function is as follows. Involved in the fragmentation of the mitochondrial network and its perinuclear clustering. Plays a minor role in the recruitment and association of the fission mediator dynamin-related protein 1 (DNM1L) to the mitochondrial surface and mitochondrial fission. May not be essential for the assembly of functional fission complexes and the subsequent membrane scission event. Also mediates peroxisomal fission. May act when the products of fission are directed toward mitochondrial homeostasis, mitophagy, or apoptosis. Can induce cytochrome c release from the mitochondrion to the cytosol, ultimately leading to apoptosis. The protein is Mitochondrial fission 1 protein (Fis1) of Mus musculus (Mouse).